The primary structure comprises 425 residues: Dihydroorotase (425 aa).

The Zn(2+) site is built by histidine 56 and histidine 58. Residues 58–60 and asparagine 90 contribute to the substrate site; that span reads HYR. The Zn(2+) site is built by aspartate 148, histidine 175, and histidine 228. Asparagine 274 provides a ligand contact to substrate. Zn(2+) is bound at residue aspartate 301. Residue aspartate 301 is part of the active site. Substrate-binding positions include histidine 305 and 319–320; that span reads FG.

The protein belongs to the metallo-dependent hydrolases superfamily. DHOase family. Class I DHOase subfamily. Zn(2+) serves as cofactor.

The catalysed reaction is (S)-dihydroorotate + H2O = N-carbamoyl-L-aspartate + H(+). Its pathway is pyrimidine metabolism; UMP biosynthesis via de novo pathway; (S)-dihydroorotate from bicarbonate: step 3/3. Catalyzes the reversible cyclization of carbamoyl aspartate to dihydroorotate. In Lactobacillus delbrueckii subsp. bulgaricus (strain ATCC BAA-365 / Lb-18), this protein is Dihydroorotase.